The sequence spans 355 residues: N-acetyl-gamma-glutamyl-phosphate reductase (355 aa).

Residue C152 is part of the active site.

The protein belongs to the NAGSA dehydrogenase family. Type 1 subfamily.

The protein resides in the cytoplasm. It carries out the reaction N-acetyl-L-glutamate 5-semialdehyde + phosphate + NADP(+) = N-acetyl-L-glutamyl 5-phosphate + NADPH + H(+). It participates in amino-acid biosynthesis; L-arginine biosynthesis; N(2)-acetyl-L-ornithine from L-glutamate: step 3/4. Catalyzes the NADPH-dependent reduction of N-acetyl-5-glutamyl phosphate to yield N-acetyl-L-glutamate 5-semialdehyde. This chain is N-acetyl-gamma-glutamyl-phosphate reductase, found in Psychrobacter arcticus (strain DSM 17307 / VKM B-2377 / 273-4).